The chain runs to 101 residues: NAD(P)H-quinone oxidoreductase subunit 4L, chloroplastic (101 aa).

A run of 3 helical transmembrane segments spans residues 2–22 (MLEY…YGLI), 32–52 (MCLE…SDLF), and 61–81 (IFSI…PAIV).

It belongs to the complex I subunit 4L family. NDH is composed of at least 16 different subunits, 5 of which are encoded in the nucleus.

It localises to the plastid. It is found in the chloroplast thylakoid membrane. The catalysed reaction is a plastoquinone + NADH + (n+1) H(+)(in) = a plastoquinol + NAD(+) + n H(+)(out). The enzyme catalyses a plastoquinone + NADPH + (n+1) H(+)(in) = a plastoquinol + NADP(+) + n H(+)(out). In terms of biological role, NDH shuttles electrons from NAD(P)H:plastoquinone, via FMN and iron-sulfur (Fe-S) centers, to quinones in the photosynthetic chain and possibly in a chloroplast respiratory chain. The immediate electron acceptor for the enzyme in this species is believed to be plastoquinone. Couples the redox reaction to proton translocation, and thus conserves the redox energy in a proton gradient. This chain is NAD(P)H-quinone oxidoreductase subunit 4L, chloroplastic, found in Acorus calamus var. americanus (American sweet flag).